The chain runs to 458 residues: ATP synthase subunit beta (458 aa).

Gly-148–Thr-155 is a binding site for ATP.

This sequence belongs to the ATPase alpha/beta chains family. In terms of assembly, F-type ATPases have 2 components, CF(1) - the catalytic core - and CF(0) - the membrane proton channel. CF(1) has five subunits: alpha(3), beta(3), gamma(1), delta(1), epsilon(1). CF(0) has three main subunits: a(1), b(2) and c(9-12). The alpha and beta chains form an alternating ring which encloses part of the gamma chain. CF(1) is attached to CF(0) by a central stalk formed by the gamma and epsilon chains, while a peripheral stalk is formed by the delta and b chains.

It is found in the cell inner membrane. The catalysed reaction is ATP + H2O + 4 H(+)(in) = ADP + phosphate + 5 H(+)(out). Produces ATP from ADP in the presence of a proton gradient across the membrane. The catalytic sites are hosted primarily by the beta subunits. The chain is ATP synthase subunit beta from Francisella tularensis subsp. tularensis (strain FSC 198).